The chain runs to 397 residues: Phosphoglycerate kinase (397 aa).

Substrate contacts are provided by residues 25–27, arginine 41, 64–67, arginine 118, and arginine 151; these read DLN and HLGR. ATP-binding positions include lysine 202, glutamate 324, and 350–353; that span reads GGDT.

Belongs to the phosphoglycerate kinase family. As to quaternary structure, monomer.

The protein resides in the cytoplasm. The enzyme catalyses (2R)-3-phosphoglycerate + ATP = (2R)-3-phospho-glyceroyl phosphate + ADP. It functions in the pathway carbohydrate degradation; glycolysis; pyruvate from D-glyceraldehyde 3-phosphate: step 2/5. This Acidovorax ebreus (strain TPSY) (Diaphorobacter sp. (strain TPSY)) protein is Phosphoglycerate kinase.